Reading from the N-terminus, the 148-residue chain is SsrA-binding protein (148 aa).

Positions 119-148 are disordered; the sequence is AKGKKQHDKRQSMKEADWKREKQRLIKHTR. The segment covering 127 to 142 has biased composition (basic and acidic residues); it reads KRQSMKEADWKREKQR.

This sequence belongs to the SmpB family.

Its subcellular location is the cytoplasm. Required for rescue of stalled ribosomes mediated by trans-translation. Binds to transfer-messenger RNA (tmRNA), required for stable association of tmRNA with ribosomes. tmRNA and SmpB together mimic tRNA shape, replacing the anticodon stem-loop with SmpB. tmRNA is encoded by the ssrA gene; the 2 termini fold to resemble tRNA(Ala) and it encodes a 'tag peptide', a short internal open reading frame. During trans-translation Ala-aminoacylated tmRNA acts like a tRNA, entering the A-site of stalled ribosomes, displacing the stalled mRNA. The ribosome then switches to translate the ORF on the tmRNA; the nascent peptide is terminated with the 'tag peptide' encoded by the tmRNA and targeted for degradation. The ribosome is freed to recommence translation, which seems to be the essential function of trans-translation. This is SsrA-binding protein from Neisseria gonorrhoeae (strain ATCC 700825 / FA 1090).